The primary structure comprises 517 residues: MAQPVHSLCSAFGLQCCLLFLLASWGAGATTFQEYQKTGELSTSDHIFPLTPGLVYSIPFDHIVLHSGQRPPELPKSTEIHEQKRHCNTTRHSKPTDKPTGNSKTIDHKSSTDNHEAPPTSEENSSNQGKDPMIRNQRSVDPADSTTTHKESAGKKHITPAPKSKINCRKSTTGKSTVTRKSDKTGRPLEKSMSTLDKTSTSSHKTTTSFHNSGNSQTKQKSTSFPEKITAASKTTYKTTGTPEESEKTEDSRTTVASDKLLTKTTKNIQETISANELTQSLAEPTEHGGRTANENNTPSPAEPTENRERTANENKKTICTKGKNTPVPEKPTENLGNTTLTTETIKAPVKSTENPEKTAAVTKTIKPSVKVTGDKSLTTTSSHLNKTEVTHQVPTGSFTLITSRTKLSSITSEATGNESHPYLNKDGSQKGIHAGQMGENDSFPAWAIVIVVLVAVILLLVFLGLIFLVSYMMRTRRTLTQNTQYNDAEDEGGPNSYPVYLMEQQNLGMGQIPSPR.

The signal sequence occupies residues Met1 to Ala29. The Extracellular segment spans residues Thr30–Ala448. The segment at Ser67–Leu341 is disordered. Residues Gln83–Ser93 show a composition bias toward basic residues. Asn88 carries N-linked (GlcNAc...) asparagine glycosylation. Basic and acidic residues predominate over residues Thr105–Glu116. N-linked (GlcNAc...) asparagine glycosylation occurs at Asn124. Residues Arg169–Thr179 show a composition bias toward polar residues. The span at Arg180 to Glu190 shows a compositional bias: basic and acidic residues. A compositionally biased stretch (low complexity) spans Ser194–Ser213. Polar residues-rich tracts occupy residues Gly214–Phe225, Ala232–Pro243, and Thr263–Ala283. Positions Thr305–Lys317 are enriched in basic and acidic residues. Asn338 carries N-linked (GlcNAc...) asparagine glycosylation. A helical membrane pass occupies residues Ile449–Leu469. At Val470–Arg517 the chain is on the cytoplasmic side.

In terms of tissue distribution, detected in lung, esophagus, stomach, rectum, skin, cervix, testis, kidney, uterus and small intestine. Expressed in pancreas (at protein level).

Its subcellular location is the cell membrane. The protein resides in the cytoplasm. May modulate NF-kappaB signaling and play a role in cell growth. The polypeptide is Mucin-like protein 3 (Homo sapiens (Human)).